Reading from the N-terminus, the 262-residue chain is (5R,7aS)-5-hydroxy-7a-methyl-1-oxo-2,3,5,6,7,7a-hexahydro-1H-indene-carboxyl-CoA reductase (262 aa).

NAD(+) contacts are provided by Asp-50, Asp-77, Val-78, Asn-104, Tyr-170, Lys-174, and Ala-203. Catalysis depends on Tyr-170, which acts as the Proton acceptor.

It belongs to the short-chain dehydrogenases/reductases (SDR) family.

The catalysed reaction is (5R,7aS)-5-hydroxy-7a-methyl-1-oxo-2,3,5,6,7,7a-hexahydro-1H-indene-carboxyl-CoA + NAD(+) = (7aS)-7a-methyl-1,5-dioxo-2,3,5,6,7,7a-hexahydro-1H-indene-carboxyl-CoA + NADH + H(+). The protein operates within steroid metabolism; cholesterol degradation. With respect to regulation, requires the presence of IpdC. Its function is as follows. Involved in the final steps of cholesterol and steroid degradation. Probably catalyzes the oxidation of the 5-OH group of (5R,7aS)-5-hydroxy-7a-methyl-1-oxo-2,3,5,6,7,7a-hexahydro-1H-indene-carboxyl-CoA, leading to the formation of HIEC-CoA. This Mycobacterium tuberculosis (strain ATCC 25618 / H37Rv) protein is (5R,7aS)-5-hydroxy-7a-methyl-1-oxo-2,3,5,6,7,7a-hexahydro-1H-indene-carboxyl-CoA reductase.